The chain runs to 1445 residues: ABC-type transporter FGSG_00046 (1445 aa).

Helical transmembrane passes span 21–41 (LFEE…MLLV), 77–97 (LILW…AAAL), 119–138 (PSSL…VTRV), 150–170 (ISIL…FESL), 187–207 (EIVG…FILG), 255–277 (TLLR…PLLL), 297–317 (YGLI…TALA), 368–388 (LQFV…IFLL), 392–412 (VALG…GTVL), 481–501 (VFST…YVLM), and 520–540 (SLFS…PAIF). The ABC transmembrane type-1 1 domain maps to 259-541 (GGLCRLFTAL…FLTSVPAIFS (283 aa)). The ABC transporter 1 domain occupies 595-821 (IRDGSVRWKG…DEIEASTYSR (227 aa)). Residue 627 to 634 (GSVGSGKS) participates in ATP binding. The disordered stretch occupies residues 803–850 (RNTQKDMQDDEIEASTYSREQNGPKKQEEDANHESNQSPETSQEHELA). Basic and acidic residues predominate over residues 824-835 (NGPKKQEEDANH). The next 6 membrane-spanning stretches (helical) occupy residues 868 to 888 (GMGF…WQNF), 912 to 932 (IGVY…VTWF), 1004 to 1024 (IPLT…QLVM), 1026 to 1046 (SIGT…LAII), 1116 to 1136 (LTLV…GVTI), and 1147 to 1167 (IGLA…LLTW). The ABC transmembrane type-1 2 domain occupies 974–1173 (HRAPMSYFES…LLTWWTMMEA (200 aa)). Positions 1210 to 1441 (IELKELSASY…DVSLFQDLFS (232 aa)) constitute an ABC transporter 2 domain. An ATP-binding site is contributed by 1244 to 1251 (GRTGSGKT).

The protein belongs to the ABC transporter superfamily. ABCC family.

It is found in the cell membrane. Functionally, ABC-type transporter; part of the gene cluster that mediates the biosynthesis of gramillins A and B, bicyclic lipopeptides that induce cell death in maize leaves but not in wheat leaves. May be involved in the secretion of gramillins. This Gibberella zeae (strain ATCC MYA-4620 / CBS 123657 / FGSC 9075 / NRRL 31084 / PH-1) (Wheat head blight fungus) protein is ABC-type transporter FGSG_00046.